The sequence spans 483 residues: Malonate-semialdehyde dehydrogenase 2 (483 aa).

The NAD(+) site is built by phenylalanine 152, lysine 176, glutamate 179, arginine 180, and serine 229. Cysteine 284 serves as the catalytic Nucleophile. Position 384 (glutamate 384) interacts with NAD(+).

The protein belongs to the aldehyde dehydrogenase family. IolA subfamily. Homotetramer.

It catalyses the reaction 3-oxopropanoate + NAD(+) + CoA + H2O = hydrogencarbonate + acetyl-CoA + NADH + H(+). The catalysed reaction is 2-methyl-3-oxopropanoate + NAD(+) + CoA + H2O = propanoyl-CoA + hydrogencarbonate + NADH + H(+). It functions in the pathway polyol metabolism; myo-inositol degradation into acetyl-CoA; acetyl-CoA from myo-inositol: step 7/7. Catalyzes the oxidation of malonate semialdehyde (MSA) and methylmalonate semialdehyde (MMSA) into acetyl-CoA and propanoyl-CoA, respectively. Is involved in a myo-inositol catabolic pathway. Bicarbonate, and not CO2, is the end-product of the enzymatic reaction. This is Malonate-semialdehyde dehydrogenase 2 from Geobacillus thermodenitrificans (strain NG80-2).